We begin with the raw amino-acid sequence, 663 residues long: DNA ligase (663 aa).

Residues 33 to 37 (DYSYD), 82 to 83 (SI), and glutamate 112 contribute to the NAD(+) site. Residue lysine 114 is the N6-AMP-lysine intermediate of the active site. NAD(+) contacts are provided by arginine 135, glutamate 171, lysine 285, and lysine 309. Positions 403, 406, 419, and 424 each coordinate Zn(2+). In terms of domain architecture, BRCT spans 581 to 663 (DKEAPLQGKV…SRILDAKSVS (83 aa)).

It belongs to the NAD-dependent DNA ligase family. LigA subfamily. Mg(2+) is required as a cofactor. It depends on Mn(2+) as a cofactor.

It catalyses the reaction NAD(+) + (deoxyribonucleotide)n-3'-hydroxyl + 5'-phospho-(deoxyribonucleotide)m = (deoxyribonucleotide)n+m + AMP + beta-nicotinamide D-nucleotide.. Its function is as follows. DNA ligase that catalyzes the formation of phosphodiester linkages between 5'-phosphoryl and 3'-hydroxyl groups in double-stranded DNA using NAD as a coenzyme and as the energy source for the reaction. It is essential for DNA replication and repair of damaged DNA. The protein is DNA ligase of Chlamydia trachomatis serovar L2 (strain ATCC VR-902B / DSM 19102 / 434/Bu).